Here is a 239-residue protein sequence, read N- to C-terminus: Phosducin-like protein 2 (239 aa).

A coiled-coil region spans residues 26–87 (TEDELFDLIK…IQQMKVEAEL (62 aa)). The Phosducin domain occupies 36 to 196 (EAAEMATEAE…TTVNDIEWQL (161 aa)). Residues 42–59 (TEAEKNEKLENASLKDLK) show a composition bias toward basic and acidic residues. 2 disordered regions span residues 42-64 (TEAE…MEDD) and 212-239 (ITLA…DSDD). A thioredoxin fold region spans residues 90-239 (FGELKEISEP…DESDNSDSDD (150 aa)). Positions 214 to 224 (LARKKSQKSRY) are enriched in basic residues. Residues 230 to 239 (DESDNSDSDD) are compositionally biased toward acidic residues.

The protein belongs to the phosducin family.

This chain is Phosducin-like protein 2 (phlp2), found in Dictyostelium discoideum (Social amoeba).